A 1064-amino-acid chain; its full sequence is Ribosome quality control complex subunit NEMF (1064 aa).

At Thr-7 the chain carries Phosphothreonine. Residues 296 to 359 adopt a coiled-coil conformation; it reads VDEFYSKIEG…LIEMNLQIVD (64 aa). At Ser-417 the chain carries Phosphoserine. A disordered region spans residues 420–451; it reads EDGDGDASIENSDAEAPKGKKKKQKNKQLQKP. Residues 438 to 447 are compositionally biased toward basic residues; the sequence is GKKKKQKNKQ. Residues 481 to 512 adopt a coiled-coil conformation; that stretch reads AAKKTQRTVEAAEKAFKSAEKKTKQTLKEVQT. Residues 694-707 show a composition bias toward acidic residues; it reads EQLEGGDSSEEETE. 2 disordered regions span residues 694-718 and 731-973; these read EQLE…DVEL and SGRD…SLTG. Residues 731–756 show a composition bias toward basic and acidic residues; it reads SGRDELSSEDGEAKAVTKDQEPIGEM. Phosphoserine is present on Ser-737. A compositionally biased stretch (polar residues) spans 771–781; it reads IDLSHLQSQRP. Positions 828–839 are enriched in basic and acidic residues; it reads IEEKDKERESAV. A coiled-coil region spans residues 858 to 882; the sequence is KRGQKSKMKKMKEKYKDQDDEDREL. Over residues 859 to 870 the composition is skewed to basic residues; that stretch reads RGQKSKMKKMKE. Residues 947–959 are compositionally biased toward basic and acidic residues; it reads DDPHDDKEEHDLD. Over residues 960-973 the composition is skewed to polar residues; the sequence is QQGNEENLFDSLTG.

The protein belongs to the NEMF family. As to quaternary structure, component of the ribosome quality control complex (RQC), composed of the E3 ubiquitin ligase LTN1, TCF25 and NEMF associated with the 60S ribosomal subunit. The complex probably also contains VCP/p97 and its ubiquitin-binding cofactors. Interacts (via its N-terminus) with XPO1.

The protein resides in the cytoplasm. Its subcellular location is the cytosol. The protein localises to the nucleus. Functionally, key component of the ribosome quality control complex (RQC), a ribosome-associated complex that mediates the extraction of incompletely synthesized nascent chains from stalled ribosomes as well as their ubiquitin-mediated proteasomal degradation. Thereby, frees 60S subunit ribosomes from the stalled translation complex and prevents the accumulation of nascent polypeptide chains that are potentially toxic for the cell. Within the RQC complex, NEMF specifically binds stalled 60S ribosomal subunits by recognizing an exposed, nascent chain-conjugated tRNA moiety and promotes the recruitment of LTN1 to stalled 60S subunits. Following binding to stalled 60S ribosomal subunits, NEMF mediates CAT tailing by recruiting alanine-charged tRNA to the A-site and directing the elongation of stalled nascent chains independently of mRNA or 40S subunits, leading to non-templated C-terminal alanine extensions (CAT tails). Mainly recruits alanine-charged tRNAs, but can also other amino acid-charged tRNAs. CAT tailing is required to promote ubiquitination of stalled nascent chains by different E3 ubiquitin-protein ligases. In the canonical RQC pathway (RQC-L), CAT tailing facilitates LTN1-dependent ubiquitination by exposing lysine residues that would otherwise remain buried in the ribosomal exit tunnel. In the alternative RQC pathway (RQC-C) CAT tailing creates an C-degron mainly composed of alanine that is recognized by the CRL2(KLHDC10) and RCHY1/PIRH2 E3 ligases, leading to ubiquitination and degradation of stalled nascent chains. NEMF may also indirectly play a role in nuclear export. The polypeptide is Ribosome quality control complex subunit NEMF (Mus musculus (Mouse)).